Here is a 213-residue protein sequence, read N- to C-terminus: rRNA N(6)-adenosine-methyltransferase Mettl5 (213 aa).

S-adenosyl-L-methionine-binding positions include glutamine 28, threonine 31, glycine 59, cysteine 62, and aspartate 108–valine 109.

The protein belongs to the methyltransferase superfamily. PrmA family. As to quaternary structure, heterodimer; heterodimerizes with Trmt112. As to expression, enriched in the brain.

Its subcellular location is the cytoplasm. The enzyme catalyses adenosine in rRNA + S-adenosyl-L-methionine = N(6)-methyladenosine in rRNA + S-adenosyl-L-homocysteine + H(+). Its function is as follows. Catalytic subunit of a heterodimer with Trmt112, which specifically methylates the 6th position of adenine in 18S rRNA. The protein is rRNA N(6)-adenosine-methyltransferase Mettl5 of Drosophila melanogaster (Fruit fly).